The primary structure comprises 271 residues: Aquaporin-11 (271 aa).

Topologically, residues 1–14 are cytoplasmic; the sequence is MSPLLGLRSELQDT. A helical membrane pass occupies residues 15-35; that stretch reads CTSLGLMLSVVLLMGLARVVA. Over 36–41 the chain is Lumenal; sequence RQQLHR. The helical transmembrane segment at 42 to 62 threads the bilayer; it reads PVAHAFVLEFLATFQLCCCTH. Topologically, residues 63–74 are cytoplasmic; that stretch reads ELQLLSEQHPAH. The chain crosses the membrane as a helical span at residues 75–95; the sequence is PTWTLTLVYFFSLVHGLTLVG. Over 96–163 the chain is Lumenal; it reads TSSNPCGVMM…ACKNPIRVDL (68 aa). Positions 99 to 101 match the NPC motif; the sequence is NPC. The chain crosses the membrane as a helical span at residues 164–184; that stretch reads LKAVITEAVCSFLFHSALLHF. At 185–194 the chain is on the cytoplasmic side; sequence QEVRTKLRIH. Residues 195 to 215 traverse the membrane as a helical segment; sequence LLAALITFLVYAGGSLTGAVF. Residues 216–218 carry the NPA motif; sequence NPA. At 216 to 234 the chain is on the lumenal side; that stretch reads NPALALSLHFMCFDEAFPQ. The chain crosses the membrane as a helical span at residues 235–255; that stretch reads FFIVYWLAPSLGILLMILMFS. Over 256–271 the chain is Cytoplasmic; that stretch reads FFLPWLHNNHTINKKE.

It belongs to the MIP/aquaporin (TC 1.A.8) family. AQP11/AQP12 subfamily. As to quaternary structure, homodimer; disulfide-linked. Homotetramer. Can also form homomultimer. Not glycosylated. As to expression, detected in the sperm head and tail (at protein level). Expressed in subcutaneous adipocytes. Expressed in testis, kidney and ejaculated spermatozoa.

The protein localises to the endoplasmic reticulum membrane. The protein resides in the cytoplasmic vesicle membrane. It is found in the cell membrane. It catalyses the reaction H2O(in) = H2O(out). The enzyme catalyses glycerol(in) = glycerol(out). The catalysed reaction is H2O2(out) = H2O2(in). Its function is as follows. Channel protein that facilitates the transport of water, glycerol and hydrogen peroxide across membrane of cell or organelles guaranteeing intracellular homeostasis in several organes like liver, kidney and brain. In situation of stress, participates in endoplasmic reticulum (ER) homeostasis by regulating redox homeostasis through the transport of hydrogen peroxide across the endoplasmic reticulum membrane thereby regulating the oxidative stress through the NADPH oxidase 2 pathway. Plays a role by maintaining an environment suitable for translation or protein foldings in the ER lumen namely by participating in the PKD1 glycosylation processing resulting in regulation of PKD1 membrane trafficking thereby preventing the accumulation of unfolding protein in ER. Plays a role in the proximal tubule function by regulating its endosomal acidification. May play a role in postnatal kidney development. In Homo sapiens (Human), this protein is Aquaporin-11.